The primary structure comprises 294 residues: MNFQSVIATLNQFWSDRGCLIAQSYDTEKGAGTMNPHTFLRAIGPEPWSVAYVEPCRRPTDGRYGENPNRFQHYYQYQVLMKPSPNNIQDLYLDSLRALGIRPEDHDIRFVEDNWESPTLGAWGVGWEVWLDGMEITQFTYFQQCGSIDCRPVSIEITYGLERLAMYLQEVDAITKIAWTDNITYGDVYLQGEIEQCSYNFEASSPDFLFNLFGLYEQEAKQLIKRELVLPSLDYVLKCSHSFNLLDARGVISVTERTRYIGRIRNLARQVGQLYLQQREKLNFPLLKETMEAA.

The protein belongs to the class-II aminoacyl-tRNA synthetase family. In terms of assembly, tetramer of two alpha and two beta subunits.

Its subcellular location is the cytoplasm. It carries out the reaction tRNA(Gly) + glycine + ATP = glycyl-tRNA(Gly) + AMP + diphosphate. This Trichodesmium erythraeum (strain IMS101) protein is Glycine--tRNA ligase alpha subunit.